The following is a 190-amino-acid chain: Translation machinery-associated protein 22 (190 aa).

Positions 63–83 are disordered; that stretch reads LNVSGTKDSNAEEQPAKLTKE. One can recognise an SUI1 domain in the interval 99–170; sequence VLIKTIERTK…DIFDFILEKF (72 aa).

It belongs to the DENR family. In terms of assembly, interacts with the 40S ribosomal subunit.

Its subcellular location is the cytoplasm. This chain is Translation machinery-associated protein 22 (tma22), found in Schizosaccharomyces pombe (strain 972 / ATCC 24843) (Fission yeast).